Reading from the N-terminus, the 439-residue chain is D-inositol 3-phosphate glycosyltransferase (439 aa).

A 1D-myo-inositol 3-phosphate-binding site is contributed by histidine 21. UDP-N-acetyl-alpha-D-glucosamine contacts are provided by residues 27 to 28 (QP) and glycine 35. Residues 32-37 (DAGGMN), lysine 90, tyrosine 123, threonine 147, and arginine 167 each bind 1D-myo-inositol 3-phosphate. Residues arginine 241, lysine 246, and glutamine 299 each contribute to the UDP-N-acetyl-alpha-D-glucosamine site. Residues tyrosine 308, arginine 309, and alanine 311 each coordinate Mg(2+). 2 residues coordinate UDP-N-acetyl-alpha-D-glucosamine: glutamate 321 and glutamate 329. Residue threonine 335 participates in Mg(2+) binding.

Belongs to the glycosyltransferase group 1 family. MshA subfamily. Homodimer.

The catalysed reaction is 1D-myo-inositol 3-phosphate + UDP-N-acetyl-alpha-D-glucosamine = 1D-myo-inositol 2-acetamido-2-deoxy-alpha-D-glucopyranoside 3-phosphate + UDP + H(+). Catalyzes the transfer of a N-acetyl-glucosamine moiety to 1D-myo-inositol 3-phosphate to produce 1D-myo-inositol 2-acetamido-2-deoxy-glucopyranoside 3-phosphate in the mycothiol biosynthesis pathway. The protein is D-inositol 3-phosphate glycosyltransferase of Mycobacterium sp. (strain JLS).